Consider the following 288-residue polypeptide: Urease accessory protein UreD 1 (288 aa).

Positions 1–10 (MHGPLAPAPS) are enriched in pro residues. The interval 1–35 (MHGPLAPAPSPERLGAAPARQRSDGRIRLRVGPAR) is disordered.

It belongs to the UreD family. UreD, UreF and UreG form a complex that acts as a GTP-hydrolysis-dependent molecular chaperone, activating the urease apoprotein by helping to assemble the nickel containing metallocenter of UreC. The UreE protein probably delivers the nickel.

Its subcellular location is the cytoplasm. Required for maturation of urease via the functional incorporation of the urease nickel metallocenter. This chain is Urease accessory protein UreD 1, found in Methylobacterium radiotolerans (strain ATCC 27329 / DSM 1819 / JCM 2831 / NBRC 15690 / NCIMB 10815 / 0-1).